Consider the following 534-residue polypeptide: Cytidylyl-2-hydroxyethylphosphonate methyltransferase (534 aa).

Positions 38–195 (KVLLLNPSAT…EHLNGNVSDD (158 aa)) constitute a B12-binding domain. Residues 268–496 (TVGSRVGQLY…TYKQGIINVP (229 aa)) form the Radical SAM core domain. 3 residues coordinate [4Fe-4S] cluster: cysteine 282, cysteine 286, and cysteine 289.

The protein belongs to the radical SAM superfamily. [4Fe-4S] cluster is required as a cofactor. Methylcob(III)alamin serves as cofactor.

It carries out the reaction cytidine 5'-{[hydroxy(2-hydroxyethyl)phosphonoyl]phosphate} + AH2 + 2 S-adenosyl-L-methionine = cytidine 5'-({hydroxy[(S)-2-hydroxypropyl]phosphonoyl}phosphate) + 5'-deoxyadenosine + L-methionine + A + S-adenosyl-L-homocysteine + 2 H(+). It participates in antibiotic biosynthesis; fosfomycin biosynthesis. Involved in fosfomycin biosynthesis. Catalyzes the C-methylation of cytidylyl-2-hydroxyethylphosphonate (HEP-CMP) to form cytidylyl-2-hydroxypropylphosphonate (HPP-CMP). The C-methylation is not stereoselective and the ratio of (S)- to (R)-HPP-CMP is almost equal in vitro. This Streptomyces wedmorensis protein is Cytidylyl-2-hydroxyethylphosphonate methyltransferase.